We begin with the raw amino-acid sequence, 527 residues long: DNA polymerase epsilon subunit 2 (527 aa).

The protein belongs to the DNA polymerase epsilon subunit B family. In terms of assembly, component of the DNA polymerase epsilon complex consisting of four subunits: the catalytic subunit POLE and the accessory subunits POLE2, POLE3 and POLE4.

The protein resides in the nucleus. In terms of biological role, accessory component of the DNA polymerase epsilon complex. Participates in DNA repair and in chromosomal DNA replication. The sequence is that of DNA polymerase epsilon subunit 2 (POLE2) from Bos taurus (Bovine).